We begin with the raw amino-acid sequence, 513 residues long: Bifunctional pantoate ligase/cytidylate kinase (513 aa).

Residues 1–283 (MVQVFRTIAG…VGSTRLIDNL (283 aa)) are pantoate--beta-alanine ligase. 30 to 37 (MGSLHAGH) provides a ligand contact to ATP. His-37 acts as the Proton donor in catalysis. Gln-61 lines the (R)-pantoate pocket. Residue Gln-61 participates in beta-alanine binding. 150 to 153 (GAKD) is an ATP binding site. Gln-156 contributes to the (R)-pantoate binding site. Residues Val-179 and 187–190 (MSSR) each bind ATP. The tract at residues 284–513 (VLNHRLPIIA…IELYKKYNKG (230 aa)) is cytidylate kinase.

The protein in the N-terminal section; belongs to the pantothenate synthetase family. This sequence in the C-terminal section; belongs to the cytidylate kinase family. Type 1 subfamily.

Its subcellular location is the cytoplasm. It carries out the reaction (R)-pantoate + beta-alanine + ATP = (R)-pantothenate + AMP + diphosphate + H(+). It catalyses the reaction CMP + ATP = CDP + ADP. The catalysed reaction is dCMP + ATP = dCDP + ADP. It functions in the pathway cofactor biosynthesis; (R)-pantothenate biosynthesis; (R)-pantothenate from (R)-pantoate and beta-alanine: step 1/1. Its function is as follows. Catalyzes the condensation of pantoate with beta-alanine in an ATP-dependent reaction via a pantoyl-adenylate intermediate. Functionally, catalyzes the transfer of a phosphate group from ATP to either CMP or dCMP to form CDP or dCDP and ADP, respectively. The protein is Bifunctional pantoate ligase/cytidylate kinase of Synechocystis sp. (strain ATCC 27184 / PCC 6803 / Kazusa).